The chain runs to 757 residues: Elongation factor G, mitochondrial (757 aa).

The transit peptide at 1–39 directs the protein to the mitochondrion; that stretch reads MLLVPRVPVVMQGKCGLLKISRPLQGSLSRGFHFSRAHR. In terms of domain architecture, tr-type G spans 65–346; sequence QKLRNIGISA…AIVDYLPNPS (282 aa). GTP contacts are provided by residues 74-81, 145-149, and 199-202; these read AHIDSGKT, DTPGH, and NKMD.

The protein belongs to the TRAFAC class translation factor GTPase superfamily. Classic translation factor GTPase family. EF-G/EF-2 subfamily.

Its subcellular location is the mitochondrion. Its pathway is protein biosynthesis; polypeptide chain elongation. Mitochondrial GTPase that catalyzes the GTP-dependent ribosomal translocation step during translation elongation. During this step, the ribosome changes from the pre-translocational (PRE) to the post-translocational (POST) state as the newly formed A-site-bound peptidyl-tRNA and P-site-bound deacylated tRNA move to the P and E sites, respectively. Catalyzes the coordinated movement of the two tRNA molecules, the mRNA and conformational changes in the ribosome. The chain is Elongation factor G, mitochondrial from Candida glabrata (strain ATCC 2001 / BCRC 20586 / JCM 3761 / NBRC 0622 / NRRL Y-65 / CBS 138) (Yeast).